Reading from the N-terminus, the 75-residue chain is Tautomerase PptA (75 aa).

The active-site Proton acceptor; via imino nitrogen is Pro-2.

It belongs to the 4-oxalocrotonate tautomerase family. PptA subfamily. In terms of assembly, homodimer.

It localises to the cytoplasm. The sequence is that of Tautomerase PptA from Escherichia coli (strain SMS-3-5 / SECEC).